Reading from the N-terminus, the 209-residue chain is V-type ATP synthase subunit D (209 aa).

It belongs to the V-ATPase D subunit family.

In terms of biological role, produces ATP from ADP in the presence of a proton gradient across the membrane. The protein is V-type ATP synthase subunit D (atpD) of Chlamydia pneumoniae (Chlamydophila pneumoniae).